Reading from the N-terminus, the 176-residue chain is Large ribosomal subunit protein uL10 (176 aa).

Belongs to the universal ribosomal protein uL10 family. As to quaternary structure, part of the ribosomal stalk of the 50S ribosomal subunit. The N-terminus interacts with L11 and the large rRNA to form the base of the stalk. The C-terminus forms an elongated spine to which L12 dimers bind in a sequential fashion forming a multimeric L10(L12)X complex.

Functionally, forms part of the ribosomal stalk, playing a central role in the interaction of the ribosome with GTP-bound translation factors. In Carboxydothermus hydrogenoformans (strain ATCC BAA-161 / DSM 6008 / Z-2901), this protein is Large ribosomal subunit protein uL10.